The following is a 32-amino-acid chain: Delta-conotoxin EVIA (32 aa).

3 cysteine pairs are disulfide-bonded: Cys3–Cys21, Cys10–Cys25, and Cys20–Cys29. Pro6 bears the 4-hydroxyproline mark. The residue at position 32 (Leu32) is a Leucine amide.

This sequence belongs to the conotoxin O1 superfamily. As to expression, expressed by the venom duct.

The protein resides in the secreted. Its function is as follows. Delta-conotoxins bind to site 6 of voltage-gated sodium channels and inhibit the inactivation process. This toxin inhibits sodium channel inactivation in neuronal membranes from amphibians and mammals (Nav1.2a/SCN1A, Nav1.3/SCN3A and Nav1.6/SCN8A) upon binding to receptor site 6. The chain is Delta-conotoxin EVIA from Conus ermineus (Agate cone).